A 576-amino-acid chain; its full sequence is Glucose-6-phosphate 1-dehydrogenase 1, chloroplastic (576 aa).

The N-terminal 50 residues, 1-50 (MATHSMIIPSPSSSSSSLATAASPFKETLPLFSRSLTFPRKSLFSQVRLR), are a transit peptide targeting the chloroplast. NADP(+) contacts are provided by residues 97 to 104 (GASGDLAK) and R131. C149 and C157 are joined by a disulfide. K234 contacts NADP(+). D-glucose 6-phosphate contacts are provided by residues K234, 264-268 (HYLGK), E302, and D321. Catalysis depends on H326, which acts as the Proton acceptor. K419 serves as a coordination point for NADP(+). Residues K422 and R427 each coordinate D-glucose 6-phosphate. The NADP(+) site is built by R432 and R461. Q463 provides a ligand contact to D-glucose 6-phosphate. NADP(+)-binding positions include 469-471 (YLR) and R554.

Belongs to the glucose-6-phosphate dehydrogenase family. In terms of assembly, forms homodimer. Interacts with G6PD2, G6PD3 and G6PD4. In terms of tissue distribution, expressed in leaves, stems, buds, flowers and siliques.

It localises to the plastid. The protein localises to the chloroplast stroma. Its subcellular location is the peroxisome. It catalyses the reaction D-glucose 6-phosphate + NADP(+) = 6-phospho-D-glucono-1,5-lactone + NADPH + H(+). The protein operates within carbohydrate degradation; pentose phosphate pathway; D-ribulose 5-phosphate from D-glucose 6-phosphate (oxidative stage): step 1/3. Its activity is regulated as follows. Regulated by metabolites. Post-translationally inactivated by cysteine-mediated redox modification via the ferredoxin-thioredoxin system in the light and this avoids futile cycles with photosynthetic CO2 fixation. Catalyzes the rate-limiting step of the oxidative pentose-phosphate pathway, which represents a route for the dissimilation of carbohydrates besides glycolysis. The main function of this enzyme is to provide reducing power (NADPH) and pentose phosphates for fatty acid and nucleic acid synthesis which are involved in membrane synthesis and cell division. This is Glucose-6-phosphate 1-dehydrogenase 1, chloroplastic from Arabidopsis thaliana (Mouse-ear cress).